A 153-amino-acid polypeptide reads, in one-letter code: Large ribosomal subunit protein bL9 (153 aa).

It belongs to the bacterial ribosomal protein bL9 family.

Binds to the 23S rRNA. The polypeptide is Large ribosomal subunit protein bL9 (Koribacter versatilis (strain Ellin345)).